Here is a 435-residue protein sequence, read N- to C-terminus: uncharacterized protein (435 aa).

12 helical membrane-spanning segments follow: residues Val14–Ala34, Thr44–Ala64, Ile84–Phe104, Phe123–Gly143, Phe153–Ile173, Val187–Ile207, Ala224–Ile244, Phe267–Ala287, Leu324–Ala344, Ile346–Ile366, Ile375–Trp395, and Phe400–Arg420.

Its subcellular location is the cell membrane. This is an uncharacterized protein from Methanocaldococcus jannaschii (strain ATCC 43067 / DSM 2661 / JAL-1 / JCM 10045 / NBRC 100440) (Methanococcus jannaschii).